Here is a 57-residue protein sequence, read N- to C-terminus: UPF0391 membrane protein Patl_0263 (57 aa).

2 helical membrane passes run 8-28 (FFVL…GVAA) and 30-50 (IAKV…VLAF).

It belongs to the UPF0391 family.

The protein resides in the cell membrane. In Pseudoalteromonas atlantica (strain T6c / ATCC BAA-1087), this protein is UPF0391 membrane protein Patl_0263.